The chain runs to 309 residues: Dihydroorotate dehydrogenase B (NAD(+)), catalytic subunit (309 aa).

FMN is bound by residues Ser21 and 45–46; that span reads KA. Residues Lys45 and 69-73 each bind substrate; that span reads NAIGL. The FMN site is built by Asn99 and Asn127. Position 127 (Asn127) interacts with substrate. The active-site Nucleophile is the Cys130. FMN contacts are provided by Lys165 and Ile191. 192-193 is a substrate binding site; that stretch reads NT. FMN-binding positions include Gly217, 243–244, and 265–266; these read GG and GT.

Belongs to the dihydroorotate dehydrogenase family. Type 1 subfamily. As to quaternary structure, heterotetramer of 2 PyrK and 2 PyrD type B subunits. The cofactor is FMN.

It localises to the cytoplasm. It carries out the reaction (S)-dihydroorotate + NAD(+) = orotate + NADH + H(+). The protein operates within pyrimidine metabolism; UMP biosynthesis via de novo pathway; orotate from (S)-dihydroorotate (NAD(+) route): step 1/1. Its function is as follows. Catalyzes the conversion of dihydroorotate to orotate with NAD(+) as electron acceptor. The chain is Dihydroorotate dehydrogenase B (NAD(+)), catalytic subunit (pyrD) from Bacillus mycoides (strain KBAB4) (Bacillus weihenstephanensis).